Reading from the N-terminus, the 110-residue chain is UPF0060 membrane protein Bcen_0802 (110 aa).

4 helical membrane-spanning segments follow: residues 9–29, 34–54, 66–86, and 88–108; these read ALFA…WLVL, PAWL…LLTL, YGGV…GVAL, and RWDV…ALQP.

The protein belongs to the UPF0060 family.

The protein localises to the cell inner membrane. The polypeptide is UPF0060 membrane protein Bcen_0802 (Burkholderia orbicola (strain AU 1054)).